A 512-amino-acid chain; its full sequence is uncharacterized protein (512 aa).

This is an uncharacterized protein from Methanocaldococcus jannaschii (strain ATCC 43067 / DSM 2661 / JAL-1 / JCM 10045 / NBRC 100440) (Methanococcus jannaschii).